We begin with the raw amino-acid sequence, 495 residues long: Meiosis-specific nuclear structural protein 1 (495 aa).

The tract at residues 1–314 is interaction with BBOF1; sequence MGSKRRNLSC…KLEEMLRQRE (314 aa). Residues 28–410 adopt a coiled-coil conformation; the sequence is VQALKNVNSQ…QLEHRRAVEK (383 aa). Position 188 is a phosphotyrosine (Tyr188).

The protein belongs to the MNS1 family. As to quaternary structure, able to form oligomers. Microtubule inner protein component of sperm flagellar doublet microtubules. Interacts with ODAD1. Interacts with BBOF1. Expressed in nasal respiratory epithelium and in the sperm.

Its subcellular location is the nucleus. The protein localises to the cytoplasm. It is found in the cytoskeleton. It localises to the cilium axoneme. The protein resides in the flagellum axoneme. Functionally, microtubule inner protein (MIP) part of the dynein-decorated doublet microtubules (DMTs) in cilia axoneme, which is required for motile cilia beating. May play a role in the control of meiotic division and germ cell differentiation through regulation of pairing and recombination during meiosis. Required for sperm flagella assembly. May play a role in the assembly and function of the outer dynein arm-docking complex (ODA-DC). ODA-DC mediates outer dynein arms (ODA) binding onto the axonemal doublet microtubules. This is Meiosis-specific nuclear structural protein 1 from Homo sapiens (Human).